The chain runs to 93 residues: MRIFVIALTLLFGWLQYTLWFGKNGVSDYYTVEDEIEVQQQVNSKLQARNNEMFAEIDDLRQGLDAIEERARHELGLVKDGETFYRIVDEEEH.

Residues 1-3 (MRI) are Cytoplasmic-facing. A helical transmembrane segment spans residues 4–21 (FVIALTLLFGWLQYTLWF). Residues 22 to 93 (GKNGVSDYYT…FYRIVDEEEH (72 aa)) are Periplasmic-facing. Positions 31-75 (TVEDEIEVQQQVNSKLQARNNEMFAEIDDLRQGLDAIEERARHEL) form a coiled coil.

It belongs to the FtsB family. Part of a complex composed of FtsB, FtsL and FtsQ.

The protein resides in the cell inner membrane. Its function is as follows. Essential cell division protein. May link together the upstream cell division proteins, which are predominantly cytoplasmic, with the downstream cell division proteins, which are predominantly periplasmic. The protein is Cell division protein FtsB of Vibrio campbellii (strain ATCC BAA-1116).